The following is a 460-amino-acid chain: tRNA modification GTPase MnmE (460 aa).

Arg-29, Glu-86, and Lys-126 together coordinate (6S)-5-formyl-5,6,7,8-tetrahydrofolate. One can recognise a TrmE-type G domain in the interval 222–383; it reads GMRVVIAGRP…LAEHLKECMG (162 aa). Position 232 (Asn-232) interacts with K(+). GTP-binding positions include 232 to 237, 251 to 257, 276 to 279, and 341 to 344; these read NAGKSS, TAIAGTT, DTAG, and NKAD. Residue Ser-236 participates in Mg(2+) binding. K(+) contacts are provided by Thr-251, Ile-253, and Thr-256. Thr-257 contributes to the Mg(2+) binding site. Residue Lys-460 participates in (6S)-5-formyl-5,6,7,8-tetrahydrofolate binding.

It belongs to the TRAFAC class TrmE-Era-EngA-EngB-Septin-like GTPase superfamily. TrmE GTPase family. Homodimer. Heterotetramer of two MnmE and two MnmG subunits. The cofactor is K(+).

It localises to the cytoplasm. Exhibits a very high intrinsic GTPase hydrolysis rate. Involved in the addition of a carboxymethylaminomethyl (cmnm) group at the wobble position (U34) of certain tRNAs, forming tRNA-cmnm(5)s(2)U34. The chain is tRNA modification GTPase MnmE from Pseudoalteromonas atlantica (strain T6c / ATCC BAA-1087).